Here is a 612-residue protein sequence, read N- to C-terminus: Isocitrate dehydrogenase kinase/phosphatase (612 aa).

Residues 327-333 (APGIKGL) and Lys348 contribute to the ATP site. Asp383 is a catalytic residue. The disordered stretch occupies residues 593–612 (AGRASPEPDAPADARSVRVA).

This sequence belongs to the AceK family.

Its subcellular location is the cytoplasm. It catalyses the reaction L-seryl-[isocitrate dehydrogenase] + ATP = O-phospho-L-seryl-[isocitrate dehydrogenase] + ADP + H(+). Functionally, bifunctional enzyme which can phosphorylate or dephosphorylate isocitrate dehydrogenase (IDH) on a specific serine residue. This is a regulatory mechanism which enables bacteria to bypass the Krebs cycle via the glyoxylate shunt in response to the source of carbon. When bacteria are grown on glucose, IDH is fully active and unphosphorylated, but when grown on acetate or ethanol, the activity of IDH declines drastically concomitant with its phosphorylation. The sequence is that of Isocitrate dehydrogenase kinase/phosphatase from Paraburkholderia phytofirmans (strain DSM 17436 / LMG 22146 / PsJN) (Burkholderia phytofirmans).